The primary structure comprises 374 residues: uncharacterized protein (374 aa).

A signal peptide spans 1–26 (MNNLIKAYAAGVMSAAFLFGSEGRVR).

This is an uncharacterized protein from Treponema pallidum (strain Nichols).